Consider the following 289-residue polypeptide: Serine/threonine-protein phosphatase Pgam5, mitochondrial (289 aa).

It belongs to the phosphoglycerate mutase family. BPG-dependent PGAM subfamily. Interacts with Pk92B/ASK1.

It localises to the mitochondrion outer membrane. It carries out the reaction O-phospho-L-seryl-[protein] + H2O = L-seryl-[protein] + phosphate. The catalysed reaction is O-phospho-L-threonyl-[protein] + H2O = L-threonyl-[protein] + phosphate. Its function is as follows. Displays phosphatase activity for serine/threonine residues, and dephosphorylates and activates Pk92B kinase. Has apparently no phosphoglycerate mutase activity. The protein is Serine/threonine-protein phosphatase Pgam5, mitochondrial of Drosophila grimshawi (Hawaiian fruit fly).